The primary structure comprises 134 residues: MSTTFCSSVSMQATSLAATTRISFQKPALVSRTNLSFNLSRSIPTRLSVSCAAKPETVEKVSKIVKKQLSLKDDQNVVAETKFADLGADSLDTVEIVMGLEEEFHIEMAEEKAQKITTVEEAAELIDELVQAKK.

The transit peptide at 1–51 directs the protein to the chloroplast; sequence MSTTFCSSVSMQATSLAATTRISFQKPALVSRTNLSFNLSRSIPTRLSVSC. The 76-residue stretch at 55–130 folds into the Carrier domain; sequence PETVEKVSKI…EAAELIDELV (76 aa). O-(pantetheine 4'-phosphoryl)serine is present on serine 90.

The protein belongs to the acyl carrier protein (ACP) family. Post-translationally, 4'-phosphopantetheine is transferred from CoA to a specific serine of apo-ACP by acpS. This modification is essential for activity because fatty acids are bound in thioester linkage to the sulfhydryl of the prosthetic group. As to expression, seed.

It is found in the plastid. The protein resides in the chloroplast. It participates in lipid metabolism; fatty acid biosynthesis. In terms of biological role, carrier of the growing fatty acid chain in fatty acid biosynthesis. The protein is Acyl carrier protein, chloroplastic (ACL1.A1) of Brassica napus (Rape).